The primary structure comprises 190 residues: Probable RNA-binding protein 18 (190 aa).

Positions 25–106 (HRLWIGNVDP…KKLVVRWAHA (82 aa)) constitute an RRM domain.

In Xenopus laevis (African clawed frog), this protein is Probable RNA-binding protein 18 (rbm18).